The sequence spans 166 residues: Interleukin-3 (166 aa).

A signal peptide spans 1 to 26; that stretch reads MVLASSTTSIHTMLLLLLMLFHLGLQ. Residue asparagine 42 is glycosylated (N-linked (GlcNAc...) asparagine). Cystine bridges form between cysteine 43–cysteine 106 and cysteine 105–cysteine 166. N-linked (GlcNAc...) asparagine; partial glycosylation is present at asparagine 112. The interval 145–166 is disordered; sequence LTSRPPQPASGSVSPNRGTVEC.

It belongs to the IL-3 family. Monomer. Activated T-cells, mast cells, natural killer cells.

It is found in the secreted. Cytokine secreted predominantly by activated T-lymphocytes as well as mast cells and osteoblastic cells that controls the production and differentiation of hematopoietic progenitor cells into lineage-restricted cells. Also stimulates mature basophils, eosinophils, and monocytes to become functionally activated. In addition, plays an important role in neural cell proliferation and survival. Participates as well in bone homeostasis and inhibits osteoclast differentiation by preventing NF-kappa-B nuclear translocation and activation. Mechanistically, exerts its biological effects through a receptor composed of IL3RA subunit and a signal transducing subunit IL3RB. Receptor stimulation results in the rapid activation of JAK2 kinase activity leading to STAT5-mediated transcriptional program. Alternatively, contributes to cell survival under oxidative stress in non-hematopoietic systems by activating pathways mediated by PI3K/AKT and ERK. The sequence is that of Interleukin-3 (Il3) from Mus musculus (Mouse).